Reading from the N-terminus, the 1155-residue chain is DNA-directed RNA polymerase subunit beta (1155 aa).

It belongs to the RNA polymerase beta chain family. As to quaternary structure, the RNAP catalytic core consists of 2 alpha, 1 beta, 1 beta' and 1 omega subunit. When a sigma factor is associated with the core the holoenzyme is formed, which can initiate transcription.

The catalysed reaction is RNA(n) + a ribonucleoside 5'-triphosphate = RNA(n+1) + diphosphate. DNA-dependent RNA polymerase catalyzes the transcription of DNA into RNA using the four ribonucleoside triphosphates as substrates. In Borrelia garinii subsp. bavariensis (strain ATCC BAA-2496 / DSM 23469 / PBi) (Borreliella bavariensis), this protein is DNA-directed RNA polymerase subunit beta.